A 1102-amino-acid chain; its full sequence is PAN2-PAN3 deadenylation complex catalytic subunit PAN2 (1102 aa).

WD repeat units lie at residues 20–59 (DYPR…RYTA), 104–144 (DEME…IVKQ), and 269–308 (NVMS…HFTD). The segment at 308-445 (DMAIPIEMPK…STDELESLKP (138 aa)) is linker. Residues 423-442 (AVPDPKVEQVPESSTDELES) form a disordered region. The USP domain maps to 446 to 833 (EAPPIYRNLE…LPAVLLFQVK (388 aa)). Positions 881-1054 (VGLDTEFVSL…EDARTALKLY (174 aa)) constitute an Exonuclease domain. Positions 884, 886, 993, and 1046 each coordinate a divalent metal cation.

Belongs to the peptidase C19 family. PAN2 subfamily. As to quaternary structure, forms a heterotrimer with an asymmetric homodimer of the regulatory subunit PAN3 to form the poly(A)-nuclease (PAN) deadenylation complex. The cofactor is a divalent metal cation.

The protein resides in the cytoplasm. The catalysed reaction is Exonucleolytic cleavage of poly(A) to 5'-AMP.. Positively regulated by the regulatory subunit PAN3. Functionally, catalytic subunit of the poly(A)-nuclease (PAN) deadenylation complex, one of two cytoplasmic mRNA deadenylases involved in mRNA turnover. PAN specifically shortens poly(A) tails of RNA and the activity is stimulated by poly(A)-binding protein PAB1. PAN deadenylation is followed by rapid degradation of the shortened mRNA tails by the CCR4-NOT complex. Deadenylated mRNAs are then degraded by two alternative mechanisms, namely exosome-mediated 3'-5' exonucleolytic degradation, or deadenylation-dependent mRNA decaping and subsequent 5'-3' exonucleolytic degradation by XRN1. May also be involved in post-transcriptional maturation of mRNA poly(A) tails. The protein is PAN2-PAN3 deadenylation complex catalytic subunit PAN2 of Chaetomium globosum (strain ATCC 6205 / CBS 148.51 / DSM 1962 / NBRC 6347 / NRRL 1970) (Soil fungus).